Consider the following 226-residue polypeptide: Ribonuclease 3 (226 aa).

The region spanning 6-128 is the RNase III domain; that stretch reads INRLQRKLGY…LIGGIFLDSD (123 aa). Glutamate 41 contributes to the Mg(2+) binding site. Aspartate 45 is a catalytic residue. Aspartate 114 and glutamate 117 together coordinate Mg(2+). Residue glutamate 117 is part of the active site. One can recognise a DRBM domain in the interval 155–225; it reads DPKTRLQEFL…AEQALKQLEL (71 aa).

The protein belongs to the ribonuclease III family. Homodimer. It depends on Mg(2+) as a cofactor.

It is found in the cytoplasm. The enzyme catalyses Endonucleolytic cleavage to 5'-phosphomonoester.. Its function is as follows. Digests double-stranded RNA. Involved in the processing of primary rRNA transcript to yield the immediate precursors to the large and small rRNAs (23S and 16S). Processes some mRNAs, and tRNAs when they are encoded in the rRNA operon. Processes pre-crRNA and tracrRNA of type II CRISPR loci if present in the organism. The chain is Ribonuclease 3 from Edwardsiella ictaluri (strain 93-146).